The following is an 81-amino-acid chain: Small ribosomal subunit protein uS15 (81 aa).

This sequence belongs to the universal ribosomal protein uS15 family. Part of the 30S ribosomal subunit. Forms a bridge to the 50S subunit in the 70S ribosome, contacting the 23S rRNA.

One of the primary rRNA binding proteins, it binds directly to 16S rRNA where it helps nucleate assembly of the platform of the 30S subunit by binding and bridging several RNA helices of the 16S rRNA. Its function is as follows. Forms an intersubunit bridge (bridge B4) with the 23S rRNA of the 50S subunit in the ribosome. This chain is Small ribosomal subunit protein uS15, found in Mesomycoplasma hyorhinis (Mycoplasma hyorhinis).